A 213-amino-acid polypeptide reads, in one-letter code: Superoxide dismutase [Mn] (213 aa).

Mn(2+) contacts are provided by His-27, His-82, Asp-168, and His-172.

It belongs to the iron/manganese superoxide dismutase family. Homodimer.

The catalysed reaction is 2 superoxide + 2 H(+) = H2O2 + O2. With respect to regulation, inhibited by hydrogen peroxide. Destroys superoxide anion radicals which are normally produced within the cells and which are toxic to biological systems. This chain is Superoxide dismutase [Mn] (sodA), found in Haemophilus ducreyi (strain 35000HP / ATCC 700724).